Here is a 481-residue protein sequence, read N- to C-terminus: uncharacterized protein (481 aa).

10 helical membrane-spanning segments follow: residues 30-50 (TIIILLGTGLFFTITTGFVQF), 96-116 (AIALGGEGAVFWMWVTAFIGM), 154-174 (CMAVAFALALIFTFGFAFNSV), 196-216 (ISLVIFTALIIFGGVKRIAII), 220-240 (LVPMMALFYLIMAVIILGMHI), 250-270 (IVQSAFSFDAAAGGMFGALVS), 311-331 (MLGVFVDTMIVCTCTAVIILL), 354-374 (IGEFGAHFLAFILLLFAYSSI), 391-411 (KPWLVLLFRLMVLFFVYFGAV), and 424-444 (VMAVMAIINLIAILMLSPIVW).

It belongs to the alanine or glycine:cation symporter (AGCS) (TC 2.A.25) family.

The protein resides in the cell inner membrane. This is an uncharacterized protein from Haemophilus influenzae (strain ATCC 51907 / DSM 11121 / KW20 / Rd).